Here is a 548-residue protein sequence, read N- to C-terminus: ATP synthase subunit alpha (548 aa).

An ATP-binding site is contributed by 172-179 (GDRKTGKT). The disordered stretch occupies residues 510-548 (QFTTSSGESAAPSEPEAEALAADEVGQETVKVNRPAPKK). Low complexity predominate over residues 514 to 531 (SSGESAAPSEPEAEALAA).

This sequence belongs to the ATPase alpha/beta chains family. F-type ATPases have 2 components, CF(1) - the catalytic core - and CF(0) - the membrane proton channel. CF(1) has five subunits: alpha(3), beta(3), gamma(1), delta(1), epsilon(1). CF(0) has three main subunits: a(1), b(2) and c(9-12). The alpha and beta chains form an alternating ring which encloses part of the gamma chain. CF(1) is attached to CF(0) by a central stalk formed by the gamma and epsilon chains, while a peripheral stalk is formed by the delta and b chains.

The protein resides in the cell membrane. The enzyme catalyses ATP + H2O + 4 H(+)(in) = ADP + phosphate + 5 H(+)(out). Produces ATP from ADP in the presence of a proton gradient across the membrane. The alpha chain is a regulatory subunit. The sequence is that of ATP synthase subunit alpha from Saccharopolyspora erythraea (strain ATCC 11635 / DSM 40517 / JCM 4748 / NBRC 13426 / NCIMB 8594 / NRRL 2338).